A 246-amino-acid polypeptide reads, in one-letter code: Ribosome maturation factor RimM (246 aa).

A compositionally biased stretch (basic and acidic residues) spans 1–15; that stretch reads MKRKQESKGAGEKRQ. Residues 1–63 are disordered; the sequence is MKRKQESKGA…NPQFTTPNPD (63 aa). A compositionally biased stretch (pro residues) spans 45–54; sequence VPSPQSPIPN. The region spanning 158-239 is the PRC barrel domain; it reads GEDEYHVVDL…RIEITPPPGL (82 aa).

The protein belongs to the RimM family. Binds ribosomal protein uS19.

It localises to the cytoplasm. In terms of biological role, an accessory protein needed during the final step in the assembly of 30S ribosomal subunit, possibly for assembly of the head region. Essential for efficient processing of 16S rRNA. May be needed both before and after RbfA during the maturation of 16S rRNA. It has affinity for free ribosomal 30S subunits but not for 70S ribosomes. This chain is Ribosome maturation factor RimM, found in Nostoc sp. (strain PCC 7120 / SAG 25.82 / UTEX 2576).